Here is a 798-residue protein sequence, read N- to C-terminus: Probable DEAD-box ATP-dependent RNA helicase 48 (798 aa).

3 disordered regions span residues 76–100, 117–148, and 236–257; these read KMWG…MSPK, DFWN…NSPI, and FRKN…GKMI. The segment covering 132–148 has biased composition (low complexity); the sequence is GSRSGSDSIDSTSNSPI. Residues 242–252 show a composition bias toward acidic residues; that stretch reads STEEDSDEEGD. The Q motif motif lies at 328-356; the sequence is KRFDESCISPLTLKALSASGILKMTRVQD. The 185-residue stretch at 359-543 folds into the Helicase ATP-binding domain; the sequence is LSECLDGKDA…QLVLKRDHSY (185 aa). 372–379 contacts ATP; it reads AKTGTGKS. The short motif at 491–494 is the DEAD box element; the sequence is DEAD. Residues 577–726 enclose the Helicase C-terminal domain; it reads LLKEHINNTP…SIVKHQVDQS (150 aa).

This sequence belongs to the DEAD box helicase family.

It catalyses the reaction ATP + H2O = ADP + phosphate + H(+). The protein is Probable DEAD-box ATP-dependent RNA helicase 48 (RH48) of Arabidopsis thaliana (Mouse-ear cress).